The sequence spans 509 residues: Proto-oncogene tyrosine-protein kinase LCK (509 aa).

A lipid anchor (N-myristoyl glycine) is attached at Gly-2. Residues 2-72 are interactions with CD4 and CD8; sequence GCVCSSNPED…DNLVIALHSY (71 aa). Residues Cys-3 and Cys-5 are each lipidated (S-palmitoyl cysteine). One can recognise an SH3 domain in the interval 61 to 121; it reads LQDNLVIALH…PFNFVAKANS (61 aa). Residue Lys-99 forms a Glycyl lysine isopeptide (Lys-Gly) (interchain with G-Cter in ubiquitin) linkage. Position 102 is a phosphoserine (Ser-102). Residues 127-224 enclose the SH2 domain; that stretch reads WFFKNLSRKD…GLCTKLSRPC (98 aa). Residues 154-242 are interaction with PTPRH; it reads RESESTAGSF…WWEDEWEVPR (89 aa). Thr-159 is subject to Phosphothreonine. Ser-162 bears the Phosphoserine mark. At Tyr-192 the chain carries Phosphotyrosine. Ser-194 is modified (phosphoserine). The 254-residue stretch at 245–498 folds into the Protein kinase domain; it reads LKLVERLGAG…YLRSVLDDFF (254 aa). ATP is bound by residues 251–259 and Lys-273; that span reads LGAGQFGEV. Lys-276 participates in a covalent cross-link: Glycyl lysine isopeptide (Lys-Gly) (interchain with G-Cter in ubiquitin). Asp-364 (proton acceptor) is an active-site residue. Tyr-394 is modified (phosphotyrosine; by autocatalysis). Tyr-505 is modified (phosphotyrosine).

This sequence belongs to the protein kinase superfamily. Tyr protein kinase family. SRC subfamily. Binds to the cytoplasmic domain of cell surface receptors, such as AXL, CD2, CD4, CD5, CD8, CD44, CD45 and CD122. Also binds to effector molecules, such as PI4K, VAV1, RASA1, FYB1 and to other protein kinases including CDK1, RAF1, ZAP70 and SYK. Binds to phosphatidylinositol 3'-kinase (PI3K) from T-lymphocytes through its SH3 domain and to the tyrosine phosphorylated form of KHDRBS1/p70 through its SH2 domain. Interacts with SQSTM1. Interacts with phosphorylated LIME1. Interacts with CBLB and PTPRH. Interacts with RUNX3. Forms a signaling complex with EPHA1, PTK2B and PI3-KINASE; upon activation by EFNA1 which may regulate T-lymphocytes migration. Associates with ZAP70 and RHOH; these interactions allow LCK-mediated RHOH and CD3 subunit phosphorylations in presence of a functional ZAP70. Interacts with CEACAM1 (via cytoplasmic domain); mediates CEACAM1 phosphorylation resulting in PTPN6 recruitment that dephosphorylates TCR stimulation-induced CD247 and ZAP70. Interacts with FYB2. Interacts with CD160. Interacts with CD48. Autophosphorylated on Tyr-394, increasing enzymatic activity, this site is dephosphorylated by PTN22. Phosphorylated on Tyr-505 by CSK, decreasing activity. Dephosphorylated by PTPRC/CD45. Dephosphorylation at Tyr-394 by PTPN2 negatively regulates T-cells differentiation. Dephosphorylation at Tyr-394 by DUSP22 negatively regulates T-cell receptor signaling. In terms of processing, myristoylation is required prior to palmitoylation. Post-translationally, palmitoylation regulates association with the plasma membrane and could be mediated by ZDHHC2. 'Lys-63'-linked ubiquitinated at Lys-99 and Lys-276 by UBR2; this modification is required for autophosphorylation at Tyr-394.

Its subcellular location is the cell membrane. It is found in the cytoplasm. It localises to the cytosol. It catalyses the reaction L-tyrosyl-[protein] + ATP = O-phospho-L-tyrosyl-[protein] + ADP + H(+). The relative activities of the inhibitory tyrosine-protein kinase CSK and the activating tyrosine-protein phosphatase PTPRC/CD45 determine the level of LCK activity. These interactions allow rapid and efficient activation of LCK in response to TCR stimulation. In terms of biological role, non-receptor tyrosine-protein kinase that plays an essential role in the selection and maturation of developing T-cells in the thymus and in the function of mature T-cells. Plays a key role in T-cell antigen receptor (TCR)-linked signal transduction pathways. Constitutively associated with the cytoplasmic portions of the CD4 and CD8 surface receptors. Association of the TCR with a peptide antigen-bound MHC complex facilitates the interaction of CD4 and CD8 with MHC class II and class I molecules, respectively, thereby recruiting the associated LCK protein to the vicinity of the TCR/CD3 complex. LCK then phosphorylates tyrosine residues within the immunoreceptor tyrosine-based activation motifs (ITAM) of the cytoplasmic tails of the TCR-gamma chains and CD3 subunits, initiating the TCR/CD3 signaling pathway. Once stimulated, the TCR recruits the tyrosine kinase ZAP70, that becomes phosphorylated and activated by LCK. Following this, a large number of signaling molecules are recruited, ultimately leading to lymphokine production. LCK also contributes to signaling by other receptor molecules. Associates directly with the cytoplasmic tail of CD2, which leads to hyperphosphorylation and activation of LCK. Also plays a role in the IL2 receptor-linked signaling pathway that controls the T-cell proliferative response. Binding of IL2 to its receptor results in increased activity of LCK. Is expressed at all stages of thymocyte development and is required for the regulation of maturation events that are governed by both pre-TCR and mature alpha beta TCR. Phosphorylates other substrates including RUNX3, PTK2B/PYK2, the microtubule-associated protein MAPT, RHOH or TYROBP. Interacts with UNC119; this interaction plays a crucial role in activation of LCK. This is Proto-oncogene tyrosine-protein kinase LCK (Lck) from Rattus norvegicus (Rat).